Here is a 128-residue protein sequence, read N- to C-terminus: Large ribosomal subunit protein bL12 (128 aa).

Belongs to the bacterial ribosomal protein bL12 family. As to quaternary structure, homodimer. Part of the ribosomal stalk of the 50S ribosomal subunit. Forms a multimeric L10(L12)X complex, where L10 forms an elongated spine to which 2 to 4 L12 dimers bind in a sequential fashion. Binds GTP-bound translation factors.

Functionally, forms part of the ribosomal stalk which helps the ribosome interact with GTP-bound translation factors. Is thus essential for accurate translation. This Petrotoga mobilis (strain DSM 10674 / SJ95) protein is Large ribosomal subunit protein bL12.